Reading from the N-terminus, the 134-residue chain is Probable thionin-2.4 (134 aa).

Residues 1-24 (MEGKTLIVSVLIMSLFMAQNQVDA) form the signal peptide. 3 cysteine pairs are disulfide-bonded: cysteine 27/cysteine 64, cysteine 28/cysteine 56, and cysteine 40/cysteine 50. Positions 71 to 134 (DILENTGDAV…KGSMNAVENA (64 aa)) are cleaved as a propeptide — acidic domain.

It belongs to the plant thionin (TC 1.C.44) family.

Its subcellular location is the secreted. Its function is as follows. Thionins are small plant proteins which are toxic to animal cells. They seem to exert their toxic effect at the level of the cell membrane. Their precise function is not known. The polypeptide is Probable thionin-2.4 (Arabidopsis thaliana (Mouse-ear cress)).